Here is a 577-residue protein sequence, read N- to C-terminus: MADALSVYAAALVDGLAQAGVTEAVISPGSRSTPLAMAMAAHPGLRLYMNIDERSAAFFALGLAKAKQRPVALVCTSGTAAANYGPAVVEAYYSRVPLVVLTADRPHELRDVGAPQAIDQLHLYGRYAKWFVDLALPEEADDMLRYARTMAARAVQTAAGAPCGPVHVNAPFREPLVPHIDEAVWERVRSVSRAPQVWRGRPALPQESVSALYEQLSAAERGLIVCGPLDRPGFAEAVTELARALDFPILADPLSQLRAGTHDKTYVLDSYDAILREETAASKLVPDVVLRFGAMPVSKPLFLWLKRHRAIRQIVVDDGGWRDPTLSADSFVQSDEWILCRQLLEWAKPKENKSAWSAIWREMNAIARAALERHLPKEEWFEGNVFTELADLLPAGAALFVGNSMPIRDADTFLFATDKPLRVLANRGANGIDGVVSSALGASVAANPLVLVIGDLSFYHDLNGLLAAKMHSLSATIVLLNNNGGGIFSFLPQARHKGAFETLFGTPTDLSFAHAVEMYGGRHTVPHNWAEFRRHVSESLSSGGLHVIEVRTSRAENVRMHRLLWNEVAREIAKCLE.

This sequence belongs to the TPP enzyme family. MenD subfamily. Homodimer. The cofactor is Mg(2+). Mn(2+) serves as cofactor. Thiamine diphosphate is required as a cofactor.

The catalysed reaction is isochorismate + 2-oxoglutarate + H(+) = 5-enolpyruvoyl-6-hydroxy-2-succinyl-cyclohex-3-ene-1-carboxylate + CO2. It participates in quinol/quinone metabolism; 1,4-dihydroxy-2-naphthoate biosynthesis; 1,4-dihydroxy-2-naphthoate from chorismate: step 2/7. It functions in the pathway quinol/quinone metabolism; menaquinone biosynthesis. In terms of biological role, catalyzes the thiamine diphosphate-dependent decarboxylation of 2-oxoglutarate and the subsequent addition of the resulting succinic semialdehyde-thiamine pyrophosphate anion to isochorismate to yield 2-succinyl-5-enolpyruvyl-6-hydroxy-3-cyclohexene-1-carboxylate (SEPHCHC). This is 2-succinyl-5-enolpyruvyl-6-hydroxy-3-cyclohexene-1-carboxylate synthase from Geobacillus kaustophilus (strain HTA426).